The chain runs to 243 residues: Uridylate kinase (243 aa).

15–18 (KLSG) lines the ATP pocket. An involved in allosteric activation by GTP region spans residues 23 to 28 (GSEGFG). Residue Gly-57 participates in UMP binding. ATP contacts are provided by Gly-58 and Arg-62. UMP-binding positions include Asp-77 and 138-145 (TGNPFFTT). Thr-165, Tyr-171, and Asp-174 together coordinate ATP.

The protein belongs to the UMP kinase family. As to quaternary structure, homohexamer.

It localises to the cytoplasm. It carries out the reaction UMP + ATP = UDP + ADP. The protein operates within pyrimidine metabolism; CTP biosynthesis via de novo pathway; UDP from UMP (UMPK route): step 1/1. Allosterically activated by GTP. Inhibited by UTP. Its function is as follows. Catalyzes the reversible phosphorylation of UMP to UDP. This Vibrio cholerae serotype O1 (strain ATCC 39541 / Classical Ogawa 395 / O395) protein is Uridylate kinase.